The chain runs to 556 residues: ATP synthase subunit alpha 2 (556 aa).

Position 177 to 184 (177 to 184) interacts with ATP; that stretch reads GDRATGKT. The segment at 514 to 556 is disordered; it reads GGHAEDAADDMGGALDGEHASGDATSIAPTPPGGAEAGAPRKR. The segment covering 546-556 has biased composition (low complexity); it reads GGAEAGAPRKR.

It belongs to the ATPase alpha/beta chains family. F-type ATPases have 2 components, CF(1) - the catalytic core - and CF(0) - the membrane proton channel. CF(1) has five subunits: alpha(3), beta(3), gamma(1), delta(1), epsilon(1). CF(0) has three main subunits: a(1), b(2) and c(9-12). The alpha and beta chains form an alternating ring which encloses part of the gamma chain. CF(1) is attached to CF(0) by a central stalk formed by the gamma and epsilon chains, while a peripheral stalk is formed by the delta and b chains.

It localises to the cell inner membrane. It catalyses the reaction ATP + H2O + 4 H(+)(in) = ADP + phosphate + 5 H(+)(out). Produces ATP from ADP in the presence of a proton gradient across the membrane. The alpha chain is a regulatory subunit. This Burkholderia thailandensis (strain ATCC 700388 / DSM 13276 / CCUG 48851 / CIP 106301 / E264) protein is ATP synthase subunit alpha 2.